The primary structure comprises 516 residues: Anaerobic nitric oxide reductase transcription regulator NorR (516 aa).

The residue at position 57 (D57) is a 4-aspartylphosphate. Positions I187–V416 constitute a Sigma-54 factor interaction domain. ATP is bound by residues G215–E222 and A278–E287. The H-T-H motif DNA-binding region spans W482–K501.

Its pathway is nitrogen metabolism; nitric oxide reduction. Its function is as follows. Required for the expression of anaerobic nitric oxide (NO) reductase, acts as a transcriptional activator for at least the norVW operon. Activation also requires sigma-54. The protein is Anaerobic nitric oxide reductase transcription regulator NorR of Klebsiella pneumoniae (strain 342).